The chain runs to 65 residues: Large ribosomal subunit protein bL35 (65 aa).

Belongs to the bacterial ribosomal protein bL35 family.

The protein is Large ribosomal subunit protein bL35 of Karelsulcia muelleri (strain GWSS) (Sulcia muelleri).